Here is an 86-residue protein sequence, read N- to C-terminus: uncharacterized protein (86 aa).

2 helical membrane-spanning segments follow: residues 20–38 and 47–63; these read IQFW…SVYL and FSTF…TKGV. The disordered stretch occupies residues 67-86; the sequence is LSQRREQGKEQGREQGREQE. Residues 69–86 show a composition bias toward basic and acidic residues; it reads QRREQGKEQGREQGREQE.

It localises to the cell membrane. This is an uncharacterized protein from Haemophilus influenzae (strain ATCC 51907 / DSM 11121 / KW20 / Rd).